The following is an 82-amino-acid chain: uncharacterized protein (82 aa).

Helical transmembrane passes span 4–26 (IAVLFIVFGFPIVAGVFGIAGHF), 31–50 (FWVAPLIVLITSLILLVTLA), and 55–77 (SFIFWVVMYTAIALVTSVATLFL).

Its subcellular location is the cell membrane. This is an uncharacterized protein from Bacillus subtilis (strain 168).